We begin with the raw amino-acid sequence, 347 residues long: NADH-ubiquinone oxidoreductase chain 2 (347 aa).

A run of 10 helical transmembrane segments spans residues 3–23 (PLAL…TMMS), 25–45 (HWLT…PILM), 59–79 (YFMT…INLM), 93–115 (VASN…HFWV), 150–170 (NTNL…WGGL), 178–198 (ILAY…PFNP), 200–220 (LTLL…MILA), 240–260 (MTIM…LSGF), 274–294 (NSII…YFYM), and 326–346 (LPTL…ISML).

The protein belongs to the complex I subunit 2 family. As to quaternary structure, core subunit of respiratory chain NADH dehydrogenase (Complex I) which is composed of 45 different subunits. Interacts with TMEM242.

It localises to the mitochondrion inner membrane. It carries out the reaction a ubiquinone + NADH + 5 H(+)(in) = a ubiquinol + NAD(+) + 4 H(+)(out). Functionally, core subunit of the mitochondrial membrane respiratory chain NADH dehydrogenase (Complex I) which catalyzes electron transfer from NADH through the respiratory chain, using ubiquinone as an electron acceptor. Essential for the catalytic activity and assembly of complex I. The sequence is that of NADH-ubiquinone oxidoreductase chain 2 from Mammuthus primigenius (Siberian woolly mammoth).